Here is a 366-residue protein sequence, read N- to C-terminus: Cobalt-precorrin-5B C(1)-methyltransferase (366 aa).

It belongs to the CbiD family.

The catalysed reaction is Co-precorrin-5B + S-adenosyl-L-methionine = Co-precorrin-6A + S-adenosyl-L-homocysteine. Its pathway is cofactor biosynthesis; adenosylcobalamin biosynthesis; cob(II)yrinate a,c-diamide from sirohydrochlorin (anaerobic route): step 6/10. Catalyzes the methylation of C-1 in cobalt-precorrin-5B to form cobalt-precorrin-6A. This is Cobalt-precorrin-5B C(1)-methyltransferase from Thermus thermophilus (strain ATCC BAA-163 / DSM 7039 / HB27).